A 345-amino-acid chain; its full sequence is Methylthioribose-1-phosphate isomerase (345 aa).

Residues 47–49 (RGA), Arg-90, and Gln-197 each bind substrate. Residue Asp-238 is the Proton donor of the active site. 248–249 (NK) serves as a coordination point for substrate.

This sequence belongs to the eIF-2B alpha/beta/delta subunits family. MtnA subfamily.

The enzyme catalyses 5-(methylsulfanyl)-alpha-D-ribose 1-phosphate = 5-(methylsulfanyl)-D-ribulose 1-phosphate. The protein operates within amino-acid biosynthesis; L-methionine biosynthesis via salvage pathway; L-methionine from S-methyl-5-thio-alpha-D-ribose 1-phosphate: step 1/6. Its function is as follows. Catalyzes the interconversion of methylthioribose-1-phosphate (MTR-1-P) into methylthioribulose-1-phosphate (MTRu-1-P). The protein is Methylthioribose-1-phosphate isomerase of Thermoanaerobacter pseudethanolicus (strain ATCC 33223 / 39E) (Clostridium thermohydrosulfuricum).